A 347-amino-acid polypeptide reads, in one-letter code: DNA-directed RNA polymerase subunit alpha (347 aa).

An alpha N-terminal domain (alpha-NTD) region spans residues 1-226; it reads MLISQRPTLS…ELFGLARELN (226 aa). An alpha C-terminal domain (alpha-CTD) region spans residues 241-347; it reads ADHIASFALP…DQDYAETEQL (107 aa).

It belongs to the RNA polymerase alpha chain family. In terms of assembly, homodimer. The RNAP catalytic core consists of 2 alpha, 1 beta, 1 beta' and 1 omega subunit. When a sigma factor is associated with the core the holoenzyme is formed, which can initiate transcription.

It catalyses the reaction RNA(n) + a ribonucleoside 5'-triphosphate = RNA(n+1) + diphosphate. DNA-dependent RNA polymerase catalyzes the transcription of DNA into RNA using the four ribonucleoside triphosphates as substrates. The sequence is that of DNA-directed RNA polymerase subunit alpha from Mycobacterium avium (strain 104).